Here is a 220-residue protein sequence, read N- to C-terminus: Ribosomal RNA large subunit methyltransferase E (220 aa).

Positions 1–10 are enriched in basic and acidic residues; it reads MSRSGKDPGK. The interval 1-24 is disordered; the sequence is MSRSGKDPGKRVKTARKRSASSTR. Gly-75, Trp-77, Asp-94, Asp-110, and Asp-134 together coordinate S-adenosyl-L-methionine. Residue Lys-174 is the Proton acceptor of the active site.

This sequence belongs to the class I-like SAM-binding methyltransferase superfamily. RNA methyltransferase RlmE family.

Its subcellular location is the cytoplasm. The enzyme catalyses uridine(2552) in 23S rRNA + S-adenosyl-L-methionine = 2'-O-methyluridine(2552) in 23S rRNA + S-adenosyl-L-homocysteine + H(+). Specifically methylates the uridine in position 2552 of 23S rRNA at the 2'-O position of the ribose in the fully assembled 50S ribosomal subunit. The sequence is that of Ribosomal RNA large subunit methyltransferase E from Erythrobacter litoralis (strain HTCC2594).